Here is a 337-residue protein sequence, read N- to C-terminus: uncharacterized protein (337 aa).

A run of 2 helical transmembrane segments spans residues 4–24 (FIFF…FSLI) and 26–46 (LLLW…LFVL).

Belongs to the plectrovirus ORF2 family.

The protein localises to the host membrane. This is an uncharacterized protein from Spiroplasma virus SpV1-R8A2 B (SpV1).